A 286-amino-acid chain; its full sequence is Ribosomal RNA small subunit methyltransferase H (286 aa).

Residues 30 to 32, Asp49, Phe88, Asp97, and Gln104 each bind S-adenosyl-L-methionine; that span reads GGH. The disordered stretch occupies residues 260–286; sequence HPLQPSDEESFNNPASRSAKLRALEMR.

The protein belongs to the methyltransferase superfamily. RsmH family.

It localises to the cytoplasm. It carries out the reaction cytidine(1402) in 16S rRNA + S-adenosyl-L-methionine = N(4)-methylcytidine(1402) in 16S rRNA + S-adenosyl-L-homocysteine + H(+). Functionally, specifically methylates the N4 position of cytidine in position 1402 (C1402) of 16S rRNA. This is Ribosomal RNA small subunit methyltransferase H from Solibacter usitatus (strain Ellin6076).